Reading from the N-terminus, the 286-residue chain is 3-hydroxyanthranilate 3,4-dioxygenase (286 aa).

Residues 1–160 form a domain A (catalytic) region; the sequence is MERCVRVKSW…SEQYRTGKPN (160 aa). Residue R43 coordinates O2. Positions 47, 53, and 91 each coordinate Fe cation. Residue E53 coordinates substrate. Residues R95 and E105 each contribute to the substrate site. The interval 161–177 is linker; sequence PDQLLKEPPFPLSTRSV. Residues 178-286 are domain B; it reads MEPMSLKAWL…QDPACKKPLG (109 aa).

This sequence belongs to the 3-HAO family. As to quaternary structure, monomer. It depends on Fe(2+) as a cofactor.

It is found in the cytoplasm. The protein localises to the cytosol. The enzyme catalyses 3-hydroxyanthranilate + O2 = (2Z,4Z)-2-amino-3-carboxymuconate 6-semialdehyde. It functions in the pathway cofactor biosynthesis; NAD(+) biosynthesis; quinolinate from L-kynurenine: step 3/3. Catalyzes the oxidative ring opening of 3-hydroxyanthranilate to 2-amino-3-carboxymuconate semialdehyde, which spontaneously cyclizes to quinolinate. This chain is 3-hydroxyanthranilate 3,4-dioxygenase (Haao), found in Rattus norvegicus (Rat).